The primary structure comprises 131 residues: uncharacterized protein (131 aa).

A run of 4 helical transmembrane segments spans residues 7–29, 49–69, 76–98, and 102–124; these read LLKF…SLLY, LVKV…LIAL, LILI…LFTY, and ELSE…FLYL.

It is found in the cell membrane. This is an uncharacterized protein from Aquifex aeolicus (strain VF5).